Consider the following 141-residue polypeptide: Hemoglobin subunit alpha (141 aa).

Residues 1 to 141 (VLSSADKNNI…VSTVLTSKYR (141 aa)) enclose the Globin domain. Serine 3 carries the post-translational modification Phosphoserine. 2 positions are modified to N6-succinyllysine: lysine 7 and lysine 11. An N6-acetyllysine; alternate modification is found at lysine 16. An N6-succinyllysine; alternate modification is found at lysine 16. Tyrosine 24 carries the post-translational modification Phosphotyrosine. The residue at position 35 (serine 35) is a Phosphoserine. Lysine 40 is subject to N6-succinyllysine. Residue serine 49 is modified to Phosphoserine. Residue histidine 58 participates in O2 binding. Histidine 87 is a binding site for heme b. Serine 102 carries the phosphoserine modification. A phosphothreonine mark is found at threonine 108, threonine 134, and threonine 137. At serine 138 the chain carries Phosphoserine.

Belongs to the globin family. Heterotetramer of two alpha chains and two beta chains. Red blood cells.

In terms of biological role, involved in oxygen transport from the lung to the various peripheral tissues. Hemopressin acts as an antagonist peptide of the cannabinoid receptor CNR1. Hemopressin-binding efficiently blocks cannabinoid receptor CNR1 and subsequent signaling. The chain is Hemoglobin subunit alpha (HBA) from Paguma larvata (Masked palm civet).